The following is a 157-amino-acid chain: Probable Brix domain-containing ribosomal biogenesis protein (157 aa).

A Brix domain is found at 1-157 (MLVTSSRKPS…KLNLRGFKKY (157 aa)).

In terms of biological role, probably involved in the biogenesis of the ribosome. This chain is Probable Brix domain-containing ribosomal biogenesis protein, found in Methanosarcina barkeri (strain Fusaro / DSM 804).